The primary structure comprises 278 residues: Hydroxyethylthiazole kinase (278 aa).

M48 is a substrate binding site. R124 and T175 together coordinate ATP. G202 contacts substrate.

It belongs to the Thz kinase family. The cofactor is Mg(2+).

The enzyme catalyses 5-(2-hydroxyethyl)-4-methylthiazole + ATP = 4-methyl-5-(2-phosphooxyethyl)-thiazole + ADP + H(+). It participates in cofactor biosynthesis; thiamine diphosphate biosynthesis; 4-methyl-5-(2-phosphoethyl)-thiazole from 5-(2-hydroxyethyl)-4-methylthiazole: step 1/1. Catalyzes the phosphorylation of the hydroxyl group of 4-methyl-5-beta-hydroxyethylthiazole (THZ). The chain is Hydroxyethylthiazole kinase from Clostridium botulinum (strain Alaska E43 / Type E3).